Reading from the N-terminus, the 330-residue chain is DNA-directed RNA polymerase subunit alpha (330 aa).

Positions 1 to 236 (MQGSVTEFLK…EQLDAFVDLR (236 aa)) are alpha N-terminal domain (alpha-NTD). Positions 250–330 (FDPILLRPVD…NWPPASIAED (81 aa)) are alpha C-terminal domain (alpha-CTD).

The protein belongs to the RNA polymerase alpha chain family. As to quaternary structure, homodimer. The RNAP catalytic core consists of 2 alpha, 1 beta, 1 beta' and 1 omega subunit. When a sigma factor is associated with the core the holoenzyme is formed, which can initiate transcription.

It catalyses the reaction RNA(n) + a ribonucleoside 5'-triphosphate = RNA(n+1) + diphosphate. Its function is as follows. DNA-dependent RNA polymerase catalyzes the transcription of DNA into RNA using the four ribonucleoside triphosphates as substrates. This is DNA-directed RNA polymerase subunit alpha from Vibrio vulnificus (strain CMCP6).